We begin with the raw amino-acid sequence, 289 residues long: Nucleotide-binding protein LAF_0356 (289 aa).

12 to 19 (GMSGAGKT) serves as a coordination point for ATP. 62–65 (DSRS) serves as a coordination point for GTP.

Belongs to the RapZ-like family.

Its function is as follows. Displays ATPase and GTPase activities. This chain is Nucleotide-binding protein LAF_0356, found in Limosilactobacillus fermentum (strain NBRC 3956 / LMG 18251) (Lactobacillus fermentum).